The sequence spans 132 residues: MSMTDPIADFLTRIRNANMVRHESLEVPASKIKRDIAEILKREGFIRNVEYIDDDKQGIIRVFLKYGKDNQRVISGLKRISKPGLRSYVKADAVPKVLNGLGIAIISTSEGVVTDKEARAKKIGGEVLAYVW.

Belongs to the universal ribosomal protein uS8 family. Part of the 30S ribosomal subunit. Contacts proteins S5 and S12.

Its function is as follows. One of the primary rRNA binding proteins, it binds directly to 16S rRNA central domain where it helps coordinate assembly of the platform of the 30S subunit. This is Small ribosomal subunit protein uS8 from Levilactobacillus brevis (strain ATCC 367 / BCRC 12310 / CIP 105137 / JCM 1170 / LMG 11437 / NCIMB 947 / NCTC 947) (Lactobacillus brevis).